The sequence spans 227 residues: ATP-dependent dethiobiotin synthetase BioD (227 aa).

ATP is bound at residue 13–18 (DAGKTT). Thr-17 serves as a coordination point for Mg(2+). The active site involves Lys-38. Residues Asp-55, 118–121 (EGAG), 178–179 (NR), 207–209 (PYI), and Glu-214 each bind ATP. Residues Asp-55 and Glu-118 each coordinate Mg(2+).

Belongs to the dethiobiotin synthetase family. As to quaternary structure, homodimer. The cofactor is Mg(2+).

It localises to the cytoplasm. The catalysed reaction is (7R,8S)-7,8-diammoniononanoate + CO2 + ATP = (4R,5S)-dethiobiotin + ADP + phosphate + 3 H(+). It functions in the pathway cofactor biosynthesis; biotin biosynthesis; biotin from 7,8-diaminononanoate: step 1/2. In terms of biological role, catalyzes a mechanistically unusual reaction, the ATP-dependent insertion of CO2 between the N7 and N8 nitrogen atoms of 7,8-diaminopelargonic acid (DAPA, also called 7,8-diammoniononanoate) to form a ureido ring. In Tolumonas auensis (strain DSM 9187 / NBRC 110442 / TA 4), this protein is ATP-dependent dethiobiotin synthetase BioD.